A 133-amino-acid chain; its full sequence is Gamma-crystallin 1 (133 aa).

The Beta/gamma crystallin 'Greek key' 2 domain occupies 1 to 41 (WMLYEHPNYTGHQYFLRRGEYPDFQQWMGLNDSIRSCRVIP). The tract at residues 42-46 (QHRGS) is connecting peptide. Beta/gamma crystallin 'Greek key' domains are found at residues 47 to 87 (FRLR…NVLE) and 88 to 130 (GHWI…RRVQ).

This sequence belongs to the beta/gamma-crystallin family. As to quaternary structure, monomer.

Functionally, crystallins are the dominant structural components of the vertebrate eye lens. The sequence is that of Gamma-crystallin 1 from Rana temporaria (European common frog).